The sequence spans 425 residues: L-cysteine:1D-myo-inositol 2-amino-2-deoxy-alpha-D-glucopyranoside ligase (425 aa).

Cys-43 lines the Zn(2+) pocket. Residues 43-46, Ser-58, and 81-83 contribute to the L-cysteinyl-5'-AMP site; these read CGIT and NVT. Positions 45-55 match the 'HIGH' region motif; the sequence is ITPYDATHMGH. Positions 199 to 204 match the 'ERGGDP' region motif; the sequence is ERGGDP. Residue Trp-240 coordinates L-cysteinyl-5'-AMP. Cys-244 is a Zn(2+) binding site. 262 to 264 serves as a coordination point for L-cysteinyl-5'-AMP; the sequence is GSD. His-269 lines the Zn(2+) pocket. Val-295 contacts L-cysteinyl-5'-AMP. The short motif at 301–305 is the 'KMSKS' region element; that stretch reads KMSKS.

This sequence belongs to the class-I aminoacyl-tRNA synthetase family. MshC subfamily. As to quaternary structure, monomer. Zn(2+) is required as a cofactor.

It catalyses the reaction 1D-myo-inositol 2-amino-2-deoxy-alpha-D-glucopyranoside + L-cysteine + ATP = 1D-myo-inositol 2-(L-cysteinylamino)-2-deoxy-alpha-D-glucopyranoside + AMP + diphosphate + H(+). In terms of biological role, catalyzes the ATP-dependent condensation of GlcN-Ins and L-cysteine to form L-Cys-GlcN-Ins. The protein is L-cysteine:1D-myo-inositol 2-amino-2-deoxy-alpha-D-glucopyranoside ligase of Paenarthrobacter aurescens (strain TC1).